A 232-amino-acid polypeptide reads, in one-letter code: MDPVTHMKHEVAKAAASRVQSGMVVGLGSGSTAALMIQYLGDRVRNGELTNIQAVPTSFQSSVLANEYGIPLTTLNEVDRIDIAIDGADEVDPQRNLIKGGGACHTREKLVDARAEQFIVVVDSSKLVEALGTTFLLPVEVLPEAYIQVGKALEKLGGKPELRMAVKKAGPVVTDQGNLVLDVKFDRIDQPAELEKAINNIPGVLENGLFVGLTDLVLVGEVDGDRVSVREF.

Residues S29 to T32, D86 to D89, and K99 to G102 each bind substrate. E108 functions as the Proton acceptor in the catalytic mechanism. K126 contacts substrate.

It belongs to the ribose 5-phosphate isomerase family. In terms of assembly, homodimer.

The catalysed reaction is aldehydo-D-ribose 5-phosphate = D-ribulose 5-phosphate. Its pathway is carbohydrate degradation; pentose phosphate pathway; D-ribose 5-phosphate from D-ribulose 5-phosphate (non-oxidative stage): step 1/1. Its function is as follows. Catalyzes the reversible conversion of ribose-5-phosphate to ribulose 5-phosphate. The protein is Ribose-5-phosphate isomerase A of Synechococcus sp. (strain ATCC 27144 / PCC 6301 / SAUG 1402/1) (Anacystis nidulans).